A 502-amino-acid polypeptide reads, in one-letter code: Neuronal acetylcholine receptor subunit alpha-7 (502 aa).

An N-terminal signal peptide occupies residues 1–22 (MCGRRGGIWLALAAALLHVSLQ). Residues 23–233 (GEFQRRLYKE…VTMRRRTLYY (211 aa)) lie on the Extracellular side of the membrane. 2 residues coordinate Ca(2+): R42 and V44. N46, N90, and N133 each carry an N-linked (GlcNAc...) asparagine glycan. C150 and C164 are disulfide-bonded. 2 residues coordinate Ca(2+): S172 and Y210. Cysteines 212 and 213 form a disulfide. Helical transmembrane passes span 234 to 254 (GLNLLIPCVLISALALLVFLL), 262 to 282 (ISLGITVLLSLTVFMLLVAEI), and 295 to 315 (QYFASTMIIVGLSVVVTVIVL). Residues 260–267 (EKISLGIT) form an essential for TMEM35A/NACHO-mediated proper subunit assembly and trafficking to cell membrane region. Residues 316–469 (RYHHHDPDGG…WKFAACVVDR (154 aa)) are Cytoplasmic-facing. Residues 470-490 (LCLMAFSVFTIICTIGILMSA) form a helical membrane-spanning segment.

The protein belongs to the ligand-gated ion channel (TC 1.A.9) family. Acetylcholine receptor (TC 1.A.9.1) subfamily. Alpha-7/CHRNA7 sub-subfamily. In terms of assembly, homopentamer. Can also form heteropentamers with CHRNB2, mainly found in basal forebrain cholinergic neurons. Interacts with RIC3; which is required for proper folding and assembly. Interacts with LYPD6. Interacts with CANX. Post-translationally, glycosylations at Asn-46, Asn-90 and Asn-133 are essential for TMEM35A/NACHO-mediated proper subunit assembly and trafficking to the cell membrane. In terms of tissue distribution, higly expressed in brain. ALso expressed in immune cells sucha as macrophages.

Its subcellular location is the postsynaptic cell membrane. It is found in the cell membrane. The enzyme catalyses K(+)(in) = K(+)(out). The catalysed reaction is Na(+)(in) = Na(+)(out). It catalyses the reaction Ca(2+)(in) = Ca(2+)(out). It carries out the reaction choline(out) = choline(in). The enzyme catalyses NH4(+)(in) = NH4(+)(out). The catalysed reaction is L-arginine(in) = L-arginine(out). It catalyses the reaction guanidine(out) = guanidine(in). Activated by a myriad of ligands such as acetylcholine, cytisine, nicotine, choline and epibatidine. Oligomeric amyloid-beta protein 42 activates specifially CHRNA7:CHRNB2 nAchRs. Activity is modulated by positive allosteric modulators (PAMs), such as flavonoids, with a wide range of chemical diversity, pharmacological sensitivity and efficacy. AChR activity is inhibited by the antagonists alpha-conotoxons RgIA, ImI and ImII, small disulfide-constrained peptides from cone snails. In terms of biological role, component of neuronal acetylcholine receptors (nAChRs) that function as pentameric, ligand-gated cation channels with high calcium permeability among other activities. nAChRs are excitatory neurotrasnmitter receptors formed by a collection of nAChR subunits known to mediate synaptic transmission in the nervous system and the neuromuscular junction. Each nAchR subunit confers differential attributes to channel properties, including activation, deactivation and desensitization kinetics, pH sensitivity, cation permeability, and binding to allosteric modulators. CHRNA7 forms homopentameric neuronal acetylcholine receptors abundantly expressed in the central nervous system, characterized by fast desensitization and high calcium permeability. Also forms heteropentamers with CHRNB2, mainly expressed in basal forebrain cholinergic neurons. Involved in the modulation of calcium-dependent signaling pathways and influences the release of neurotransmitters, including dopamine, glutamate and GABA. Involved in the modulation of calcium-dependent signaling pathways and influences the release of neurotransmitters, including dopamine, glutamate and GABA. Also expressed in non-neuronal cells such as immune cells like lymphocytes, monocytes and macrophages. In T cells, activation induces metabotropic signaling that results in an increase of intracellular Ca2+ concentrations, independent of ionotropic receptor functions. In macrophages, required for acetylcholine-mediated inhibition of TNF and other inflammatory cytokine release. Once activated by acetylcholine, nicotine or other agonists, selectively inhibits production of pro-inflammatory cytokines while leaving anti-inflammatory cytokines undisturbed. Stimulates the cholinergic anti-inflammatory pathway, controlling inflammation by inhibiting NFKB nuclear translocation and activating the JAK2-STAT3 pathway, independently of ion channel activity. Also expressed in the urothelium where it modulates reflex bladder activity by increasing intracellular calcium through internal stores and decreasing basal ATP release. The protein is Neuronal acetylcholine receptor subunit alpha-7 (Chrna7) of Mus musculus (Mouse).